The sequence spans 83 residues: Hepcidin (83 aa).

The first 23 residues, 1 to 23 (MALSTRTQAACLLLLLLASLSST), serve as a signal peptide directing secretion. Residues 24 to 53 (TYLHQQMRQTTELQPLHGEESRADIAIPMQ) constitute a propeptide that is removed on maturation. Intrachain disulfides connect Cys-65–Cys-81, Cys-68–Cys-71, Cys-69–Cys-77, and Cys-72–Cys-80.

It belongs to the hepcidin family. Interacts with SLC40A1; this interaction promotes SLC40A1 rapid ubiquitination. In terms of tissue distribution, highly expressed in the liver and to a much lesser extent in the heart. Secreted in blood.

Its subcellular location is the secreted. In terms of biological role, liver-produced hormone that constitutes the main circulating regulator of iron absorption and distribution across tissues. Acts by promoting endocytosis and degradation of SLC40A1, leading to the retention of iron in iron-exporting cells and decreased flow of iron into plasma. Controls the major flows of iron into plasma: absorption of dietary iron in the intestine, recycling of iron by macrophages, which phagocytose old erythrocytes and other cells, and mobilization of stored iron from hepatocytes. The sequence is that of Hepcidin (Hamp) from Mus musculus (Mouse).